Here is an 89-residue protein sequence, read N- to C-terminus: HssA/B-like protein DDB_G0295685 (89 aa).

The protein belongs to the hssA/B family.

The chain is HssA/B-like protein DDB_G0295685 from Dictyostelium discoideum (Social amoeba).